The chain runs to 305 residues: UDP-3-O-acyl-N-acetylglucosamine deacetylase (305 aa).

Zn(2+) is bound by residues His-79, His-238, and Asp-242. The active-site Proton donor is the His-265.

The protein belongs to the LpxC family. Zn(2+) serves as cofactor.

It catalyses the reaction a UDP-3-O-[(3R)-3-hydroxyacyl]-N-acetyl-alpha-D-glucosamine + H2O = a UDP-3-O-[(3R)-3-hydroxyacyl]-alpha-D-glucosamine + acetate. It functions in the pathway glycolipid biosynthesis; lipid IV(A) biosynthesis; lipid IV(A) from (3R)-3-hydroxytetradecanoyl-[acyl-carrier-protein] and UDP-N-acetyl-alpha-D-glucosamine: step 2/6. Its function is as follows. Catalyzes the hydrolysis of UDP-3-O-myristoyl-N-acetylglucosamine to form UDP-3-O-myristoylglucosamine and acetate, the committed step in lipid A biosynthesis. The chain is UDP-3-O-acyl-N-acetylglucosamine deacetylase from Shigella dysenteriae serotype 1 (strain Sd197).